Here is a 53-residue protein sequence, read N- to C-terminus: Neuronal protein NP-190 (53 aa).

As to expression, mainly expressed in the fetal brain where it is specifically localized to the proximal axonal segments, cell bodies and growth cones. Lower level of expression was also detected in the fetal heart and the skeletal muscle. No expression in kidney, liver, lung or spleen.

It is found in the membrane. Neuronal antigen that may play a role in brain development. May be involved in neurite formation or axonal guidance. In Sus scrofa (Pig), this protein is Neuronal protein NP-190.